A 432-amino-acid polypeptide reads, in one-letter code: MAVSAFQLWRAGGLLRRNFLTHSSSWKIPPRVLKSSQPEALLSVTNNALCFAPLQTFTDEDIMMQKAVKKFAQEQIAPLVSTMDENSKMEKSVIQGLFQQGMMGIEVEAKYGGTEASFLCSVLVIEELAKVDASVALLCDIQNTVINKLFRKHGTEEQKATYLPKLVTEKLGSFCLSEAGAGSDSFALKTRADKSGNYYVINGSKMWISNAEHAELFLVFANVDPPSGYRGITCFLVDRDTEGFQIGRRENKMGIRASSTCQLTFENVKVPETSVLGKIGHGYKYAIGSLNEGRIGIAAQMLGLAQGCFDYTIPYIKERMQFGKRIFDFQGLQHQVAHVATQLEAARLLTYNAARLVEAGRPFIKEASMAKYYASEVAGLTTSKCIEWMGGVGYTKDYPVEKFFRDAKIGTIYEGTSNIQLNTIAKHIDAEY.

Residues 1-33 (MAVSAFQLWRAGGLLRRNFLTHSSSWKIPPRVL) constitute a mitochondrion transit peptide. N6-acetyllysine; alternate is present on K70. K70 is modified (N6-succinyllysine; alternate). Residues 174–183 (FCLSEAGAGS) and 207–209 (WIS) contribute to the FAD site. S183 is a substrate binding site. Position 183 is a phosphoserine (S183). A substrate-binding site is contributed by Y229. The residue at position 278 (K278) is an N6-succinyllysine. Y283 provides a ligand contact to substrate. K284 carries the post-translational modification N6-acetyllysine; alternate. The residue at position 284 (K284) is an N6-succinyllysine; alternate. 291–294 (NEGR) contacts substrate. Residues R319, Q330, and 387–391 (EWMGG) contribute to the FAD site. The Proton acceptor role is filled by E414. An FAD-binding site is contributed by 416-418 (TSN). K426 is subject to N6-acetyllysine.

It belongs to the acyl-CoA dehydrogenase family. In terms of assembly, homotetramer. It depends on FAD as a cofactor. Ubiquitously expressed.

It localises to the mitochondrion matrix. It catalyses the reaction 2-methylbutanoyl-CoA + oxidized [electron-transfer flavoprotein] + H(+) = (2E)-2-methylbut-2-enoyl-CoA + reduced [electron-transfer flavoprotein]. It carries out the reaction (2S)-2-methylbutanoyl-CoA + oxidized [electron-transfer flavoprotein] + H(+) = (2E)-2-methylbut-2-enoyl-CoA + reduced [electron-transfer flavoprotein]. The enzyme catalyses (2R)-2-methylbutanoyl-CoA + oxidized [electron-transfer flavoprotein] + H(+) = ethylacryloyl-CoA + reduced [electron-transfer flavoprotein]. The catalysed reaction is butanoyl-CoA + oxidized [electron-transfer flavoprotein] + H(+) = (2E)-butenoyl-CoA + reduced [electron-transfer flavoprotein]. It catalyses the reaction 2-methylpropanoyl-CoA + oxidized [electron-transfer flavoprotein] + H(+) = 2-methylpropenoyl-CoA + reduced [electron-transfer flavoprotein]. It carries out the reaction hexanoyl-CoA + oxidized [electron-transfer flavoprotein] + H(+) = (2E)-hexenoyl-CoA + reduced [electron-transfer flavoprotein]. The enzyme catalyses valproyl-CoA + oxidized [electron-transfer flavoprotein] + H(+) = (2E)-2-propylpent-2-enoyl-CoA + reduced [electron-transfer flavoprotein]. Its pathway is lipid metabolism; mitochondrial fatty acid beta-oxidation. It participates in amino-acid degradation; L-isoleucine degradation. With respect to regulation, inhibited by N-ethylmaleimide, hydroxymercuribenzoate, methyl mercury iodide and heavy metals such as Hg2+, Cu2+, and Ag2+. In terms of biological role, short and branched chain specific acyl-CoA dehydrogenase that catalyzes the removal of one hydrogen from C-2 and C-3 of the fatty acyl-CoA thioester, resulting in the formation of trans-2-enoyl-CoA. Among the different mitochondrial acyl-CoA dehydrogenases, acts specifically on short and branched chain acyl-CoA derivatives such as (S)-2-methylbutyryl-CoA as well as short straight chain acyl-CoAs such as butyryl-CoA. Plays an important role in the metabolism of L-isoleucine by catalyzing the dehydrogenation of 2-methylbutyryl-CoA, one of the steps of the L-isoleucine catabolic pathway. Can also act on valproyl-CoA, a metabolite of the valproic acid drug. This Rattus norvegicus (Rat) protein is Short/branched chain specific acyl-CoA dehydrogenase, mitochondrial.